The sequence spans 416 residues: 4-hydroxy-3-methylbut-2-en-1-yl diphosphate synthase (flavodoxin) (416 aa).

Residues Cys304, Cys307, Cys350, and Glu357 each coordinate [4Fe-4S] cluster.

It belongs to the IspG family. Requires [4Fe-4S] cluster as cofactor.

The catalysed reaction is (2E)-4-hydroxy-3-methylbut-2-enyl diphosphate + oxidized [flavodoxin] + H2O + 2 H(+) = 2-C-methyl-D-erythritol 2,4-cyclic diphosphate + reduced [flavodoxin]. Its pathway is isoprenoid biosynthesis; isopentenyl diphosphate biosynthesis via DXP pathway; isopentenyl diphosphate from 1-deoxy-D-xylulose 5-phosphate: step 5/6. Its function is as follows. Converts 2C-methyl-D-erythritol 2,4-cyclodiphosphate (ME-2,4cPP) into 1-hydroxy-2-methyl-2-(E)-butenyl 4-diphosphate. The chain is 4-hydroxy-3-methylbut-2-en-1-yl diphosphate synthase (flavodoxin) from Rhizobium leguminosarum bv. trifolii (strain WSM2304).